Reading from the N-terminus, the 517-residue chain is 2-isopropylmalate synthase (517 aa).

A Pyruvate carboxyltransferase domain is found at 4–266; sequence INFFDTTLRD…ESTIQLNEIK (263 aa). The Mn(2+) site is built by D13, H201, H203, and N237. The interval 391–517 is regulatory domain; the sequence is EFESLQVHYG…IEIEKHHAIS (127 aa).

The protein belongs to the alpha-IPM synthase/homocitrate synthase family. LeuA type 1 subfamily. Homodimer. Mn(2+) serves as cofactor.

The protein localises to the cytoplasm. It carries out the reaction 3-methyl-2-oxobutanoate + acetyl-CoA + H2O = (2S)-2-isopropylmalate + CoA + H(+). It participates in amino-acid biosynthesis; L-leucine biosynthesis; L-leucine from 3-methyl-2-oxobutanoate: step 1/4. Functionally, catalyzes the condensation of the acetyl group of acetyl-CoA with 3-methyl-2-oxobutanoate (2-ketoisovalerate) to form 3-carboxy-3-hydroxy-4-methylpentanoate (2-isopropylmalate). The chain is 2-isopropylmalate synthase from Bacillus pumilus (strain SAFR-032).